The chain runs to 425 residues: Serine--tRNA ligase (425 aa).

233–235 (TAE) lines the L-serine pocket. 264 to 266 (RRE) contributes to the ATP binding site. Position 287 (Glu-287) interacts with L-serine. Residue 351–354 (EISS) coordinates ATP. An L-serine-binding site is contributed by Ser-385.

Belongs to the class-II aminoacyl-tRNA synthetase family. Type-1 seryl-tRNA synthetase subfamily. Homodimer. The tRNA molecule binds across the dimer.

It is found in the cytoplasm. It catalyses the reaction tRNA(Ser) + L-serine + ATP = L-seryl-tRNA(Ser) + AMP + diphosphate + H(+). The catalysed reaction is tRNA(Sec) + L-serine + ATP = L-seryl-tRNA(Sec) + AMP + diphosphate + H(+). Its pathway is aminoacyl-tRNA biosynthesis; selenocysteinyl-tRNA(Sec) biosynthesis; L-seryl-tRNA(Sec) from L-serine and tRNA(Sec): step 1/1. Catalyzes the attachment of serine to tRNA(Ser). Is also able to aminoacylate tRNA(Sec) with serine, to form the misacylated tRNA L-seryl-tRNA(Sec), which will be further converted into selenocysteinyl-tRNA(Sec). In Synechococcus sp. (strain CC9902), this protein is Serine--tRNA ligase.